The chain runs to 426 residues: Glutamate-1-semialdehyde 2,1-aminomutase (426 aa).

Position 265 is an N6-(pyridoxal phosphate)lysine (Lys-265).

The protein belongs to the class-III pyridoxal-phosphate-dependent aminotransferase family. HemL subfamily. Homodimer. The cofactor is pyridoxal 5'-phosphate.

It localises to the cytoplasm. The catalysed reaction is (S)-4-amino-5-oxopentanoate = 5-aminolevulinate. It participates in porphyrin-containing compound metabolism; protoporphyrin-IX biosynthesis; 5-aminolevulinate from L-glutamyl-tRNA(Glu): step 2/2. The protein is Glutamate-1-semialdehyde 2,1-aminomutase of Yersinia pseudotuberculosis serotype O:1b (strain IP 31758).